We begin with the raw amino-acid sequence, 229 residues long: Large ribosomal subunit protein uL1 (229 aa).

It belongs to the universal ribosomal protein uL1 family. Part of the 50S ribosomal subunit.

Its function is as follows. Binds directly to 23S rRNA. The L1 stalk is quite mobile in the ribosome, and is involved in E site tRNA release. In terms of biological role, protein L1 is also a translational repressor protein, it controls the translation of the L11 operon by binding to its mRNA. This is Large ribosomal subunit protein uL1 from Chlorobium luteolum (strain DSM 273 / BCRC 81028 / 2530) (Pelodictyon luteolum).